The following is a 159-amino-acid chain: Ribosomal RNA large subunit methyltransferase H (159 aa).

S-adenosyl-L-methionine is bound by residues Leu76, Gly108, and 127 to 132; that span reads FGLLTL.

Belongs to the RNA methyltransferase RlmH family. As to quaternary structure, homodimer.

It localises to the cytoplasm. It carries out the reaction pseudouridine(1915) in 23S rRNA + S-adenosyl-L-methionine = N(3)-methylpseudouridine(1915) in 23S rRNA + S-adenosyl-L-homocysteine + H(+). Its function is as follows. Specifically methylates the pseudouridine at position 1915 (m3Psi1915) in 23S rRNA. The chain is Ribosomal RNA large subunit methyltransferase H from Streptococcus pyogenes serotype M18 (strain MGAS8232).